A 188-amino-acid chain; its full sequence is Elongation factor P-like protein (188 aa).

It belongs to the elongation factor P family.

This is Elongation factor P-like protein from Stenotrophomonas maltophilia (strain K279a).